A 338-amino-acid chain; its full sequence is GTPase Obg (338 aa).

The Obg domain occupies 1–159 (MSFIDEVKIH…RWLRLELKLM (159 aa)). Positions 160–331 (ADVGLLGMPS…LLDEIARQLW (172 aa)) constitute an OBG-type G domain. GTP-binding positions include 166–173 (GMPSVGKS), 191–195 (FTTLK), 213–216 (DIPG), 283–286 (NKMD), and 312–314 (SAA). Residues S173 and T193 each contribute to the Mg(2+) site.

The protein belongs to the TRAFAC class OBG-HflX-like GTPase superfamily. OBG GTPase family. Monomer. The cofactor is Mg(2+).

Its subcellular location is the cytoplasm. In terms of biological role, an essential GTPase which binds GTP, GDP and possibly (p)ppGpp with moderate affinity, with high nucleotide exchange rates and a fairly low GTP hydrolysis rate. Plays a role in control of the cell cycle, stress response, ribosome biogenesis and in those bacteria that undergo differentiation, in morphogenesis control. The sequence is that of GTPase Obg from Geotalea daltonii (strain DSM 22248 / JCM 15807 / FRC-32) (Geobacter daltonii).